Here is a 95-residue protein sequence, read N- to C-terminus: UPF0235 protein PTH_1821 (95 aa).

Belongs to the UPF0235 family.

The protein is UPF0235 protein PTH_1821 of Pelotomaculum thermopropionicum (strain DSM 13744 / JCM 10971 / SI).